Here is a 295-residue protein sequence, read N- to C-terminus: Threonine/homoserine exporter RhtA (295 aa).

The Cytoplasmic segment spans residues 1 to 9; that stretch reads MPGSLRKMP. Residues 10 to 30 traverse the membrane as a helical segment; that stretch reads VWLPIVILLVAMASIQGGASL. The region spanning 30 to 135 is the EamA 1 domain; the sequence is LAKSLFPLVG…VLAVLGLWFL (106 aa). Over 31–38 the chain is Periplasmic; that stretch reads AKSLFPLV. The chain crosses the membrane as a helical span at residues 39-59; that stretch reads GAPGVTALRLALGTLILIAFF. The Cytoplasmic segment spans residues 60 to 71; sequence KPWRLRFAKEQR. Residues 72–92 traverse the membrane as a helical segment; that stretch reads LPLLFYGVSLGGMNYLFYLSI. Residue Gln-93 is a topological domain, periplasmic. The chain crosses the membrane as a helical span at residues 94–114; that stretch reads TVPLGIAVALEFTGPLAVALF. The Cytoplasmic portion of the chain corresponds to 115–118; it reads SSRR. A helical transmembrane segment spans residues 119-139; the sequence is PVDFVWVVLAVLGLWFLLPLG. Topologically, residues 140 to 146 are periplasmic; it reads QDVSHVD. The chain crosses the membrane as a helical span at residues 147-167; sequence LTGCALALGAGACWAIYILSG. Positions 159–278 constitute an EamA 2 domain; it reads CWAIYILSGQ…LGAIIAASMG (120 aa). At 168 to 175 the chain is on the cytoplasmic side; that stretch reads QRAGAEHG. A helical membrane pass occupies residues 176–196; that stretch reads PATVAIGSLIAALIFVPIGAL. Over 197–200 the chain is Periplasmic; that stretch reads QAGE. The chain crosses the membrane as a helical span at residues 201-221; sequence ALWHWSVIPLGLAVAILSTAL. Over 222–237 the chain is Cytoplasmic; sequence PYSLEMIALTRLPTRT. The chain crosses the membrane as a helical span at residues 238 to 258; the sequence is FGTLMSMEPALAAVSGMIFLG. Residues 259-262 are Periplasmic-facing; the sequence is ETLT. A helical membrane pass occupies residues 263–283; the sequence is PIQLLALGAIIAASMGSTLTV. At 284 to 295 the chain is on the cytoplasmic side; it reads RKESKIKELDIN.

The protein belongs to the drug/metabolite transporter (DMT) superfamily. 10 TMS drug/metabolite exporter (DME) (TC 2.A.7.3) family.

The protein localises to the cell inner membrane. Functionally, involved in the efflux of threonine and homoserine. The sequence is that of Threonine/homoserine exporter RhtA (rhtA) from Escherichia coli O157:H7.